Consider the following 145-residue polypeptide: 3-dehydroquinate dehydratase (145 aa).

The Proton acceptor role is filled by Tyr-23. Substrate is bound by residues Asn-73, His-79, and Asp-86. His-99 serves as the catalytic Proton donor. Substrate contacts are provided by residues 100-101 (LS) and Arg-110.

Belongs to the type-II 3-dehydroquinase family. Homododecamer.

It carries out the reaction 3-dehydroquinate = 3-dehydroshikimate + H2O. It participates in metabolic intermediate biosynthesis; chorismate biosynthesis; chorismate from D-erythrose 4-phosphate and phosphoenolpyruvate: step 3/7. Its function is as follows. Catalyzes a trans-dehydration via an enolate intermediate. The chain is 3-dehydroquinate dehydratase from Desulfitobacterium hafniense (strain DSM 10664 / DCB-2).